The primary structure comprises 148 residues: Large ribosomal subunit protein bL9 (148 aa).

Belongs to the bacterial ribosomal protein bL9 family.

Functionally, binds to the 23S rRNA. This Bacillus cereus (strain B4264) protein is Large ribosomal subunit protein bL9.